The chain runs to 528 residues: Calcium-dependent protein kinase 4 (528 aa).

A compositionally biased stretch (polar residues) spans 1–16 (MGQEMSTQSDMQNENQ). The segment at 1–36 (MGQEMSTQSDMQNENQKGNKRNLKGSQGKNGLKERS) is disordered. Glycine 2 is lipidated: N-myristoyl glycine. The 259-residue stretch at 70 to 328 (YKGIKILGKG…ARDALEHEWI (259 aa)) folds into the Protein kinase domain. ATP contacts are provided by residues 76-84 (LGKGSFGEV) and lysine 99. Aspartate 193 acts as the Proton acceptor in catalysis. The short motif at 350-358 (NIKQFQSTQ) is the J domain autoinhibitory motif element. Positions 350–386 (NIKQFQSTQKLAQAALLYMGSKLTTIDETKELTKIFK) are j domain. Residues 359–368 (KLAQAALLYM) carry the J domain EF-hand interaction motif motif. 4 EF-hand domains span residues 376–411 (DETK…LLKL), 423–458 (AIEV…RKLL), 459–494 (LSTE…GDVS), and 498–528 (WKTV…LCNY). Ca(2+) contacts are provided by aspartate 389, asparagine 391, aspartate 393, glutamine 395, glutamate 400, aspartate 436, aspartate 438, asparagine 440, tyrosine 442, glutamate 447, aspartate 472, aspartate 474, serine 476, lysine 478, glutamate 483, aspartate 506, asparagine 508, aspartate 510, glutamate 512, and glutamate 517.

It belongs to the protein kinase superfamily. Ser/Thr protein kinase family. CDPK subfamily. As to quaternary structure, may interact with the pre-replication MCM complex prior male gametogenesis activation. Mg(2+) serves as cofactor. Myristoylated; myristoylation may target it to different subcellular compartments. During male gametogenesis, myristoylation is required to initiate DNA replication but not for mitotic spindle assembly or axoneme activation. Post-translationally, not palmitoylated. In terms of processing, may be autophosphorylated on Thr-234 in vitro.

It is found in the cytoplasm. The protein resides in the membrane. Its subcellular location is the chromosome. It carries out the reaction L-seryl-[protein] + ATP = O-phospho-L-seryl-[protein] + ADP + H(+). It catalyses the reaction L-threonyl-[protein] + ATP = O-phospho-L-threonyl-[protein] + ADP + H(+). Its activity is regulated as follows. Activated by calcium. Upon calcium binding to the EF-hand domains, the C-terminus of the junction domain (J domain) undergoes a conformational change which results in the dissociation of the pseudo-substrate inhibitory motif from the catalytic domain. This, in turn, may facilitate the autophosphorylation of the activation loop at Thr-234, which leads to the kinase activation. Intracellular calcium increase is triggered by xanthurenic acid (XA), a small mosquito molecule that induces the differentiation of specialized transmission stages, the gametocytes, into male and female gametes. Activated by a decrease in temperature (20 degrees Celsius) and an increase in pH (7.6) occurring when the parasite is ingested by in the mosquito. Functionally, calcium-dependent protein kinase which acts as a sensor and effector of intracellular Ca(2+) levels probably in part downstream of cGMP-activated PKG kinase. Plays a central role in the host erythrocytes and hepatocytes infection cycles, sexual reproduction and mosquito transmission of the parasite. During the liver stage, involved in sporozoite motility and thus in sporozoite invasion of host hepatocytes, probably together with CDPK1 and CDPK5. Involved in merosome egress from host hepatocytes, probably together with CDPK5. During the asexual blood stage, involved in merozoite invasion of host erythrocytes and motility by stabilizing the inner membrane complex, a structure below the plasma membrane which acts as an anchor for the glidosome, an acto-myosin motor. Required for cell cycle progression in the male gametocyte. During male gametogenesis in the mosquito gut, required to initiate the first round of DNA replication, probably by facilitating the assembly of the pre-replicative MCM complex, to assemble the first mitotic spindle and, at the end of gametogenesis, to initiate axoneme motility, cytokinesis and subsequent exflagellation. For each of these steps, may phosphorylate SOC1, SOC2 and SOC3, respectively. Together with CDPK1, regulates ookinete gliding in the mosquito host midgut. During male gametogenesis in the mosquito gut, required to initiate the first round of DNA replication, probably by facilitating the assembly of the pre-replicative MCM complex, and to assemble the first mitotic spindle. Its function is as follows. At the end of male gametogenesis in the mosquito gut, required to initiate axoneme motility, cytokinesis and subsequent exflagellation. In Plasmodium berghei (strain Anka), this protein is Calcium-dependent protein kinase 4.